A 38-amino-acid chain; its full sequence is Large ribosomal subunit protein bL36A (38 aa).

It belongs to the bacterial ribosomal protein bL36 family.

The sequence is that of Large ribosomal subunit protein bL36A from Pectobacterium atrosepticum (strain SCRI 1043 / ATCC BAA-672) (Erwinia carotovora subsp. atroseptica).